The following is a 968-amino-acid chain: RNA polymerase-associated protein RapA (968 aa).

The Helicase ATP-binding domain maps to 164–334 (DVGRRHAPRV…FARLRLLDPN (171 aa)). 177–184 (DEVGLGKT) is an ATP binding site. A DEAH box motif is present at residues 280–283 (DEAH). In terms of domain architecture, Helicase C-terminal spans 490 to 662 (RVEWLMGYLT…YLASPDETEG (173 aa)).

This sequence belongs to the SNF2/RAD54 helicase family. RapA subfamily. As to quaternary structure, interacts with the RNAP. Has a higher affinity for the core RNAP than for the holoenzyme. Its ATPase activity is stimulated by binding to RNAP.

Transcription regulator that activates transcription by stimulating RNA polymerase (RNAP) recycling in case of stress conditions such as supercoiled DNA or high salt concentrations. Probably acts by releasing the RNAP, when it is trapped or immobilized on tightly supercoiled DNA. Does not activate transcription on linear DNA. Probably not involved in DNA repair. The polypeptide is RNA polymerase-associated protein RapA (Escherichia coli O127:H6 (strain E2348/69 / EPEC)).